A 214-amino-acid chain; its full sequence is Large ribosomal subunit protein bL25 (214 aa).

The protein belongs to the bacterial ribosomal protein bL25 family. CTC subfamily. As to quaternary structure, part of the 50S ribosomal subunit; part of the 5S rRNA/L5/L18/L25 subcomplex. Contacts the 5S rRNA. Binds to the 5S rRNA independently of L5 and L18.

In terms of biological role, this is one of the proteins that binds to the 5S RNA in the ribosome where it forms part of the central protuberance. This is Large ribosomal subunit protein bL25 from Polynucleobacter necessarius subsp. necessarius (strain STIR1).